A 448-amino-acid polypeptide reads, in one-letter code: Phosphoglucosamine mutase (448 aa).

Ser100 (phosphoserine intermediate) is an active-site residue. Ser100, Asp240, Asp242, and Asp244 together coordinate Mg(2+). Ser100 is modified (phosphoserine).

It belongs to the phosphohexose mutase family. Mg(2+) serves as cofactor. Activated by phosphorylation.

It carries out the reaction alpha-D-glucosamine 1-phosphate = D-glucosamine 6-phosphate. In terms of biological role, catalyzes the conversion of glucosamine-6-phosphate to glucosamine-1-phosphate. The chain is Phosphoglucosamine mutase from Bacillus cytotoxicus (strain DSM 22905 / CIP 110041 / 391-98 / NVH 391-98).